We begin with the raw amino-acid sequence, 300 residues long: Regulatory protein NocR (300 aa).

Positions 1-59 (MIQSRQLEAFRPVMLTGGMTSAANLVRITQPAISRLIRDLEEEIGISLFERTGNRLRPT) constitute an HTH lysR-type domain. The H-T-H motif DNA-binding region spans 19 to 38 (MTSAANLVRITQPAISRLIR).

This sequence belongs to the LysR transcriptional regulatory family.

Functionally, positive regulatory protein for the noc operon involved in nopaline catabolism and uptake. This chain is Regulatory protein NocR (nocR), found in Agrobacterium tumefaciens (strain T37).